A 175-amino-acid chain; its full sequence is ADP-ribosylation factor 6 (175 aa).

G2 carries N-myristoyl glycine lipidation. K3 carries the N6-myristoyl lysine lipid modification. Residues 23 to 28, 41 to 44, 63 to 67, 122 to 125, and 155 to 156 contribute to the GTP site; these read AAGKTT, TIPT, DVGGQ, NKQD, and CA.

The protein belongs to the small GTPase superfamily. Arf family.

The protein localises to the cytoplasm. It is found in the cytosol. It localises to the cell membrane. The protein resides in the endosome membrane. Its subcellular location is the recycling endosome membrane. The protein localises to the cell projection. It is found in the filopodium membrane. It localises to the ruffle. The protein resides in the cleavage furrow. Its subcellular location is the midbody. The protein localises to the midbody ring. It is found in the golgi apparatus. It catalyses the reaction GTP + H2O = GDP + phosphate + H(+). Functionally, GTP-binding protein involved in protein trafficking; regulates endocytic recycling and cytoskeleton remodeling. May modulate vesicle budding and uncoating within the Golgi apparatus. May contribute to the regulation of dendritic branching, filopodia extension and dendritic spine development. The protein is ADP-ribosylation factor 6 (arf6) of Xenopus laevis (African clawed frog).